The sequence spans 95 residues: Aspartyl/glutamyl-tRNA(Asn/Gln) amidotransferase subunit C (95 aa).

It belongs to the GatC family. As to quaternary structure, heterotrimer of A, B and C subunits.

The enzyme catalyses L-glutamyl-tRNA(Gln) + L-glutamine + ATP + H2O = L-glutaminyl-tRNA(Gln) + L-glutamate + ADP + phosphate + H(+). It catalyses the reaction L-aspartyl-tRNA(Asn) + L-glutamine + ATP + H2O = L-asparaginyl-tRNA(Asn) + L-glutamate + ADP + phosphate + 2 H(+). In terms of biological role, allows the formation of correctly charged Asn-tRNA(Asn) or Gln-tRNA(Gln) through the transamidation of misacylated Asp-tRNA(Asn) or Glu-tRNA(Gln) in organisms which lack either or both of asparaginyl-tRNA or glutaminyl-tRNA synthetases. The reaction takes place in the presence of glutamine and ATP through an activated phospho-Asp-tRNA(Asn) or phospho-Glu-tRNA(Gln). The protein is Aspartyl/glutamyl-tRNA(Asn/Gln) amidotransferase subunit C of Syntrophotalea carbinolica (strain DSM 2380 / NBRC 103641 / GraBd1) (Pelobacter carbinolicus).